A 171-amino-acid polypeptide reads, in one-letter code: 3-hydroxydecanoyl-[acyl-carrier-protein] dehydratase (171 aa).

Residue H70 is part of the active site.

This sequence belongs to the thioester dehydratase family. FabA subfamily. In terms of assembly, homodimer.

It is found in the cytoplasm. It catalyses the reaction a (3R)-hydroxyacyl-[ACP] = a (2E)-enoyl-[ACP] + H2O. It carries out the reaction (3R)-hydroxydecanoyl-[ACP] = (2E)-decenoyl-[ACP] + H2O. The catalysed reaction is (2E)-decenoyl-[ACP] = (3Z)-decenoyl-[ACP]. The protein operates within lipid metabolism; fatty acid biosynthesis. Necessary for the introduction of cis unsaturation into fatty acids. Catalyzes the dehydration of (3R)-3-hydroxydecanoyl-ACP to E-(2)-decenoyl-ACP and then its isomerization to Z-(3)-decenoyl-ACP. Can catalyze the dehydratase reaction for beta-hydroxyacyl-ACPs with saturated chain lengths up to 16:0, being most active on intermediate chain length. This is 3-hydroxydecanoyl-[acyl-carrier-protein] dehydratase from Pseudomonas fluorescens (strain Pf0-1).